Here is a 486-residue protein sequence, read N- to C-terminus: Deleted in azoospermia protein 3 (486 aa).

A compositionally biased stretch (polar residues) spans 1 to 10; that stretch reads MSAANPETPN. The disordered stretch occupies residues 1–27; the sequence is MSAANPETPNSTISREASTQSSSAAAS. The segment covering 11–27 has biased composition (low complexity); it reads STISREASTQSSSAAAS. Positions 40 to 115 constitute an RRM domain; that stretch reads NTVFVGGIDA…KKLKLGPAIR (76 aa). 12 DAZ domains span residues 167–190, 191–214, 215–238, 239–262, 263–286, 287–310, 311–334, 335–358, 359–382, 383–406, 407–430, and 431–454; these read AYSAYPHSPGQVITGCQLLVYNYQ, EYPTYPDSAFQVTTGYQLPVYNYQ, PFPAYPRSPFQVTAGYQLPVYNYQ, AFPAYPNSPFQVATGYQFPVYNYQ, PFPAYPSSPFQVTAGYQLPVYNYQ, AFPAYPNSPVQVTTGYQLPVYNYQ, and AFPAYPNSAVQVTTGYQFHVYNYQ.

Belongs to the RRM DAZ family. As to quaternary structure, forms a heterodimer with BOLL and DAZL. Interacts with PUM2, DAZAP1, DAZAP2, DZIP1 and DZIP3. In terms of tissue distribution, testis specific.

It localises to the cytoplasm. The protein resides in the nucleus. Its function is as follows. RNA-binding protein that plays an essential role in spermatogenesis. May act by binding to the 3'-UTR of mRNAs and regulating their translation. The protein is Deleted in azoospermia protein 3 (DAZ3) of Homo sapiens (Human).